The sequence spans 143 residues: Transcription antitermination protein NusB (143 aa).

The protein belongs to the NusB family.

Involved in transcription antitermination. Required for transcription of ribosomal RNA (rRNA) genes. Binds specifically to the boxA antiterminator sequence of the ribosomal RNA (rrn) operons. This is Transcription antitermination protein NusB from Buchnera aphidicola subsp. Acyrthosiphon pisum (strain 5A).